An 838-amino-acid polypeptide reads, in one-letter code: Probable beta-glucosidase I (838 aa).

N-linked (GlcNAc...) asparagine glycosylation is found at Asn-57 and Asn-197. The active site involves Asp-225. One can recognise a PA14 domain in the interval 395–555; that stretch reads EGEKGFKFRV…GQEELISKAA (161 aa). N-linked (GlcNAc...) asparagine glycosylation occurs at Asn-493.

Belongs to the glycosyl hydrolase 3 family.

It is found in the secreted. It catalyses the reaction Hydrolysis of terminal, non-reducing beta-D-glucosyl residues with release of beta-D-glucose.. It functions in the pathway glycan metabolism; cellulose degradation. Functionally, beta-glucosidases are one of a number of cellulolytic enzymes involved in the degradation of cellulosic biomass. Catalyzes the last step releasing glucose from the inhibitory cellobiose. The chain is Probable beta-glucosidase I (bglI) from Aspergillus clavatus (strain ATCC 1007 / CBS 513.65 / DSM 816 / NCTC 3887 / NRRL 1 / QM 1276 / 107).